We begin with the raw amino-acid sequence, 1275 residues long: Histone-lysine N-methyltransferase PRDM16 (1275 aa).

Positions 1–10 are enriched in basic residues; that stretch reads MRSKARARKL. The segment at 1-66 is disordered; it reads MRSKARARKL…SEDFTPKEGS (66 aa). Positions 82–211 constitute an SET domain; that stretch reads PDFELRESSI…PGEELLVHVK (130 aa). The C2H2-type 1; degenerate zinc-finger motif lies at 230–255; the sequence is FRCDECDELFQCRLDLRRHKKYACSS. 5 C2H2-type zinc fingers span residues 282–304, 310–332, 338–361, 367–389, and 395–417; these read HECK…MIVH, YKCD…QMSH, FECE…RSQH, HACP…KHIH, and FICE…KRMH. The C2H2-type 7; atypical zinc finger occupies 424-446; that stretch reads IKCKDCGQMFSTTSSLNKHRRFC. Disordered regions lie at residues 592–658 and 789–838; these read VKNR…VPPG and APKV…GVSE. Residues 610-625 are compositionally biased toward low complexity; sequence TTTGTDLDTTTGTGSD. Composition is skewed to basic and acidic residues over residues 631–648 and 821–835; these read DSDR…ESKP and REPR…RKPG. The segment at 680-1038 is interaction with CTBP1, CTBP2 and ZNF516; it reads EEQLLTASGA…KHEHEGAPVS (359 aa). A mediates interaction with SKI and regulation of TGF-beta signaling region spans residues 740-1275; it reads PFTDRALAHN…SGAFNPINHL (536 aa). C2H2-type zinc fingers lie at residues 951 to 973, 979 to 1002, and 1008 to 1030; these read YTCR…LRTH, YRCK…RNIH, and FKCH…LKKH. Disordered regions lie at residues 1027–1065 and 1084–1169; these read LKKH…HALL and EMNQ…MGFD. A compositionally biased stretch (polar residues) spans 1038-1058; sequence SQHSGVLTNHLGTSASSPTSE. Over residues 1117–1133 the composition is skewed to acidic residues; it reads DVEEEEEEELEEEDDDS.

The protein belongs to the PRDM16 family. Interacts with CEBPA, CEBPB and CEBPD; the interaction is direct. Interacts with PPARG and PPARA; controls brown adipocytes. Interacts with CTBP1 and CTBP2; represses the expression of WAT-specific genes. Interacts with PPARGC1A and PPARGC1B; interaction with PPARGC1A or PPARGC1B activates the transcription of BAT-specific gene. Interacts with HDAC1, SKI and SMAD2; the interaction with SKI promotes the recruitment of SMAD3-HDAC1 complex on the promoter of TGF-beta target genes. Interacts with ZNF516; the interaction is direct and may play a role in the transcription of brown adipose tissue-specific gene. Enriched in BAT compared to WAT. Detected in heart, lung, kidney and brain. Expressed in nuclei of cardiomyocytes.

It is found in the nucleus. Its subcellular location is the cytoplasm. It carries out the reaction L-lysyl(9)-[histone H3] + S-adenosyl-L-methionine = N(6)-methyl-L-lysyl(9)-[histone H3] + S-adenosyl-L-homocysteine + H(+). In terms of biological role, binds DNA and functions as a transcriptional regulator. Displays histone methyltransferase activity and monomethylates 'Lys-9' of histone H3 (H3K9me1) in vitro. Probably catalyzes the monomethylation of free histone H3 in the cytoplasm which is then transported to the nucleus and incorporated into nucleosomes where SUV39H methyltransferases use it as a substrate to catalyze histone H3 'Lys-9' trimethylation. Likely to be one of the primary histone methyltransferases along with MECOM/PRDM3 that direct cytoplasmic H3K9me1 methylation. Functions in the differentiation of brown adipose tissue (BAT) which is specialized in dissipating chemical energy in the form of heat in response to cold or excess feeding while white adipose tissue (WAT) is specialized in the storage of excess energy and the control of systemic metabolism. Together with CEBPB, regulates the differentiation of myoblastic precursors into brown adipose cells. Functions as a repressor of TGF-beta signaling. This chain is Histone-lysine N-methyltransferase PRDM16, found in Mus musculus (Mouse).